A 512-amino-acid chain; its full sequence is Centrosomal protein CCDC61 (512 aa).

Met1 carries the N-acetylmethionine modification. The head domain stretch occupies residues Met1–Pro143. Coiled coils occupy residues Ile178–Glu205 and Cys248–Glu275. Residues Leu276–Val477 form a disordered region. Thr285 is subject to Phosphothreonine. The span at Thr293 to Ala306 shows a compositional bias: basic and acidic residues. Residues Ser334, Ser336, Ser373, and Ser376 each carry the phosphoserine modification. Residues Arg407–Ser425 show a composition bias toward low complexity. A phosphoserine mark is found at Ser447 and Ser473.

The protein belongs to the CCDC61 family. As to quaternary structure, forms homodimers (via head domain). Interacts with CEP170. Interacts with PCM1 and CEP131. Binds tubulin.

It localises to the cytoplasm. The protein localises to the cytoskeleton. It is found in the microtubule organizing center. Its subcellular location is the centrosome. The protein resides in the centriolar satellite. It localises to the cilium basal body. In terms of biological role, microtubule-binding centrosomal protein required for centriole cohesion, independently of the centrosome-associated protein/CEP250 and rootletin/CROCC linker. In interphase, required for anchoring microtubule at the mother centriole subdistal appendages and for centrosome positioning. During mitosis, may be involved in spindle assembly and chromatin alignment by regulating the organization of spindle microtubules into a symmetrical structure. Has been proposed to play a role in CEP170 recruitment to centrosomes. However, this function could not be confirmed. Plays a non-essential role in ciliogenesis. The protein is Centrosomal protein CCDC61 of Homo sapiens (Human).